Here is a 3394-residue protein sequence, read N- to C-terminus: Protein PFC0760c (3394 aa).

3 stretches are compositionally biased toward low complexity: residues Asn471–Asn508, Asn515–His528, and Asn786–Asn841. 8 disordered regions span residues Asn471–Asn539, Met779–Ile844, Asn1038–Asp1099, Thr1892–Asp1918, Lys2648–Leu2693, Ala2835–Asn2909, Val3000–Thr3057, and Asp3107–Glu3394. The segment covering Asn1038–Asn1097 has biased composition (basic and acidic residues). Acidic residues predominate over residues Gly2657–Asn2671. The segment covering Asn2672–Met2686 has biased composition (low complexity). Residues Lys2836–Tyr2846 are compositionally biased toward polar residues. 2 stretches are compositionally biased toward low complexity: residues Asp2855–Asn2865 and Asn2872–Asn2909. Composition is skewed to acidic residues over residues Asp3007–Glu3047 and Asp3147–Asp3257. A compositionally biased stretch (basic and acidic residues) spans Asn3258 to Asn3292. Over residues Leu3300–Ser3309 the composition is skewed to polar residues. Residues His3310 to Glu3320 show a composition bias toward basic and acidic residues. Residues Ile3321–Ser3330 show a composition bias toward polar residues. The segment covering Asn3331–Phe3379 has biased composition (acidic residues). Polar residues predominate over residues Gly3385–Glu3394.

The protein is Protein PFC0760c of Plasmodium falciparum (isolate 3D7).